A 533-amino-acid polypeptide reads, in one-letter code: Calcium/calmodulin-dependent protein kinase type II subunit delta (533 aa).

The residue at position 2 (Ala2) is an N-acetylalanine. Residues 14–272 (YQLFEELGKG…ASEALKHPWI (259 aa)) enclose the Protein kinase domain. ATP contacts are provided by residues 20 to 28 (LGKGAFSVV) and Lys43. Asp136 serves as the catalytic Proton acceptor. The autoinhibitory domain stretch occupies residues 283–292 (HRQETVDCLK). Position 287 is a phosphothreonine; by autocatalysis (Thr287). The tract at residues 291 to 301 (LKKFNARRKLK) is calmodulin-binding. Phosphothreonine; by autocatalysis occurs at positions 306 and 307. Residue Ser315 is modified to Phosphoserine. At Lys318 the chain carries N6-acetyllysine. Residues Ser319 and Ser364 each carry the phosphoserine modification. The tract at residues 337-375 (TSPKENIPTPALEPQTTVIHNPDGNKESTESSNTTIEDE) is disordered. Phosphothreonine is present on Thr365. Ser367 bears the Phosphoserine mark. A phosphothreonine mark is found at Thr370 and Thr371. 3 positions are modified to phosphoserine: Ser438, Ser524, and Ser528.

The protein belongs to the protein kinase superfamily. CAMK Ser/Thr protein kinase family. CaMK subfamily. In terms of assembly, CAMK2 is composed of 4 different chains: alpha (CAMK2A), beta (CAMK2B), gamma (CAMK2G), and delta (CAMK2D). The different isoforms assemble into homo- or heteromultimeric holoenzymes composed of 12 subunits with two hexameric rings stacked one on top of the other. Interacts with RRAD and CACNB2. Autophosphorylation of Thr-287 following activation by Ca(2+)/calmodulin. Phosphorylation of Thr-287 locks the kinase into an activated state. Expressed in liver.

The protein resides in the cell membrane. The protein localises to the sarcolemma. Its subcellular location is the sarcoplasmic reticulum membrane. The enzyme catalyses L-seryl-[protein] + ATP = O-phospho-L-seryl-[protein] + ADP + H(+). It catalyses the reaction L-threonyl-[protein] + ATP = O-phospho-L-threonyl-[protein] + ADP + H(+). Activated by Ca(2+)/calmodulin. Binding of calmodulin results in conformational change that relieves intrasteric autoinhibition and allows autophosphorylation of Thr-287 which turns the kinase in a constitutively active form and confers to the kinase a Ca(2+)-independent activity. Functionally, calcium/calmodulin-dependent protein kinase involved in the regulation of Ca(2+) homeostatis and excitation-contraction coupling (ECC) in heart by targeting ion channels, transporters and accessory proteins involved in Ca(2+) influx into the myocyte, Ca(2+) release from the sarcoplasmic reticulum (SR), SR Ca(2+) uptake and Na(+) and K(+) channel transport. Targets also transcription factors and signaling molecules to regulate heart function. In its activated form, is involved in the pathogenesis of dilated cardiomyopathy and heart failure. Contributes to cardiac decompensation and heart failure by regulating SR Ca(2+) release via direct phosphorylation of RYR2 Ca(2+) channel on 'Ser-2808'. In the nucleus, phosphorylates the MEF2 repressor HDAC4, promoting its nuclear export and binding to 14-3-3 protein, and expression of MEF2 and genes involved in the hypertrophic program. Is essential for left ventricular remodeling responses to myocardial infarction. In pathological myocardial remodeling acts downstream of the beta adrenergic receptor signaling cascade to regulate key proteins involved in ECC. Regulates Ca(2+) influx to myocytes by binding and phosphorylating the L-type Ca(2+) channel subunit beta-2 CACNB2. In addition to Ca(2+) channels, can target and regulate the cardiac sarcolemmal Na(+) channel Nav1.5/SCN5A and the K+ channel Kv4.3/KCND3, which contribute to arrhythmogenesis in heart failure. Phosphorylates phospholamban (PLN/PLB), an endogenous inhibitor of SERCA2A/ATP2A2, contributing to the enhancement of SR Ca(2+) uptake that may be important in frequency-dependent acceleration of relaxation (FDAR) and maintenance of contractile function during acidosis. May participate in the modulation of skeletal muscle function in response to exercise, by regulating SR Ca(2+) transport through phosphorylation of PLN/PLB and triadin, a ryanodine receptor-coupling factor. In response to interferon-gamma (IFN-gamma) stimulation, catalyzes phosphorylation of STAT1, stimulating the JAK-STAT signaling pathway. The protein is Calcium/calmodulin-dependent protein kinase type II subunit delta (CAMK2D) of Oryctolagus cuniculus (Rabbit).